A 396-amino-acid chain; its full sequence is Ornithine aminotransferase 2 (396 aa).

Lysine 255 carries the post-translational modification N6-(pyridoxal phosphate)lysine.

The protein belongs to the class-III pyridoxal-phosphate-dependent aminotransferase family. OAT subfamily. Pyridoxal 5'-phosphate is required as a cofactor.

The protein resides in the cytoplasm. The catalysed reaction is a 2-oxocarboxylate + L-ornithine = L-glutamate 5-semialdehyde + an L-alpha-amino acid. It participates in amino-acid biosynthesis; L-proline biosynthesis; L-glutamate 5-semialdehyde from L-ornithine: step 1/1. Functionally, catalyzes the interconversion of ornithine to glutamate semialdehyde. This is Ornithine aminotransferase 2 from Staphylococcus aureus (strain MRSA252).